The primary structure comprises 228 residues: L-ribulose-5-phosphate 4-epimerase UlaF (228 aa).

Residues 26 to 27 (GN), 43 to 44 (SG), and 72 to 73 (SS) each bind substrate. Zn(2+) contacts are provided by aspartate 74, histidine 93, and histidine 95. The active-site Proton donor/acceptor is the aspartate 118. Histidine 167 is a binding site for Zn(2+). The active-site Proton donor/acceptor is the tyrosine 225.

The protein belongs to the aldolase class II family. AraD/FucA subfamily. It depends on Zn(2+) as a cofactor.

It catalyses the reaction L-ribulose 5-phosphate = D-xylulose 5-phosphate. The protein operates within cofactor degradation; L-ascorbate degradation; D-xylulose 5-phosphate from L-ascorbate: step 4/4. Its function is as follows. Catalyzes the isomerization of L-ribulose 5-phosphate to D-xylulose 5-phosphate. Is involved in the anaerobic L-ascorbate utilization. The sequence is that of L-ribulose-5-phosphate 4-epimerase UlaF from Escherichia coli (strain K12 / MC4100 / BW2952).